A 189-amino-acid polypeptide reads, in one-letter code: MEHKDNSKMYGTTILCIRRNNHVIIAGDGQVSLGHTVMKNSAKKVKRLANDTVITGFAGATADAFTLFERLEGKLEKHPGQLLRACVELAKDWRMDRYLRRLEAMMIVADKSVSLVISGNGDVLEPENGIAAIGSGGNYALAAAKALCESNDKFSQNMTLEYIVTTAMNIAAEICIYTNNNIIMEKIED.

The active site involves Thr12. Ala172, Cys175, and Thr178 together coordinate Na(+).

Belongs to the peptidase T1B family. HslV subfamily. As to quaternary structure, a double ring-shaped homohexamer of HslV is capped on each side by a ring-shaped HslU homohexamer. The assembly of the HslU/HslV complex is dependent on binding of ATP.

It is found in the cytoplasm. It catalyses the reaction ATP-dependent cleavage of peptide bonds with broad specificity.. Its activity is regulated as follows. Allosterically activated by HslU binding. Its function is as follows. Protease subunit of a proteasome-like degradation complex believed to be a general protein degrading machinery. The protein is ATP-dependent protease subunit HslV of Ehrlichia ruminantium (strain Welgevonden).